Reading from the N-terminus, the 450-residue chain is tRNA-2-methylthio-N(6)-dimethylallyladenosine synthase (450 aa).

Residues 14-132 (GEFFIETWGC…FPNYLNEVKK (119 aa)) enclose the MTTase N-terminal domain. [4Fe-4S] cluster is bound by residues Cys23, Cys59, Cys93, Cys169, Cys173, and Cys176. One can recognise a Radical SAM core domain in the interval 155 to 385 (RKNSMKAFVT…VEVVNEISAK (231 aa)). Positions 388–450 (KAYEGKIEEV…NSFSLTGEEI (63 aa)) constitute a TRAM domain.

The protein belongs to the methylthiotransferase family. MiaB subfamily. Monomer. [4Fe-4S] cluster serves as cofactor.

The protein localises to the cytoplasm. The catalysed reaction is N(6)-dimethylallyladenosine(37) in tRNA + (sulfur carrier)-SH + AH2 + 2 S-adenosyl-L-methionine = 2-methylsulfanyl-N(6)-dimethylallyladenosine(37) in tRNA + (sulfur carrier)-H + 5'-deoxyadenosine + L-methionine + A + S-adenosyl-L-homocysteine + 2 H(+). Its function is as follows. Catalyzes the methylthiolation of N6-(dimethylallyl)adenosine (i(6)A), leading to the formation of 2-methylthio-N6-(dimethylallyl)adenosine (ms(2)i(6)A) at position 37 in tRNAs that read codons beginning with uridine. The protein is tRNA-2-methylthio-N(6)-dimethylallyladenosine synthase of Clostridium botulinum (strain Langeland / NCTC 10281 / Type F).